A 191-amino-acid chain; its full sequence is Small ribosomal subunit protein uS7 (191 aa).

Residues 56–80 form a disordered region; that stretch reads NKSGEQGDGDGESGGKAGGIKKRSL.

Belongs to the universal ribosomal protein uS7 family. Part of the 30S ribosomal subunit. Contacts proteins S9 and S11.

One of the primary rRNA binding proteins, it binds directly to 16S rRNA where it nucleates assembly of the head domain of the 30S subunit. Is located at the subunit interface close to the decoding center, probably blocks exit of the E-site tRNA. In Coxiella burnetii (strain CbuK_Q154) (Coxiella burnetii (strain Q154)), this protein is Small ribosomal subunit protein uS7.